The sequence spans 377 residues: tRNA(Met) cytidine acetate ligase (377 aa).

Residues 7-20 (ITEYNPFHNGHLFH), Gly100, Asn153, and Arg178 contribute to the ATP site.

Belongs to the TmcAL family.

It is found in the cytoplasm. It catalyses the reaction cytidine(34) in elongator tRNA(Met) + acetate + ATP = N(4)-acetylcytidine(34) in elongator tRNA(Met) + AMP + diphosphate. Its function is as follows. Catalyzes the formation of N(4)-acetylcytidine (ac(4)C) at the wobble position of elongator tRNA(Met), using acetate and ATP as substrates. First activates an acetate ion to form acetyladenylate (Ac-AMP) and then transfers the acetyl group to tRNA to form ac(4)C34. This Staphylococcus epidermidis (strain ATCC 35984 / DSM 28319 / BCRC 17069 / CCUG 31568 / BM 3577 / RP62A) protein is tRNA(Met) cytidine acetate ligase.